The sequence spans 154 residues: 6,7-dimethyl-8-ribityllumazine synthase (154 aa).

5-amino-6-(D-ribitylamino)uracil is bound by residues Phe-22, 56–58 (AFE), and 80–82 (AVI). A (2S)-2-hydroxy-3-oxobutyl phosphate-binding site is contributed by 85–86 (AT). Residue His-88 is the Proton donor of the active site. Residue Phe-113 coordinates 5-amino-6-(D-ribitylamino)uracil. (2S)-2-hydroxy-3-oxobutyl phosphate is bound at residue Arg-127.

Belongs to the DMRL synthase family.

The enzyme catalyses (2S)-2-hydroxy-3-oxobutyl phosphate + 5-amino-6-(D-ribitylamino)uracil = 6,7-dimethyl-8-(1-D-ribityl)lumazine + phosphate + 2 H2O + H(+). It participates in cofactor biosynthesis; riboflavin biosynthesis; riboflavin from 2-hydroxy-3-oxobutyl phosphate and 5-amino-6-(D-ribitylamino)uracil: step 1/2. Its function is as follows. Catalyzes the formation of 6,7-dimethyl-8-ribityllumazine by condensation of 5-amino-6-(D-ribitylamino)uracil with 3,4-dihydroxy-2-butanone 4-phosphate. This is the penultimate step in the biosynthesis of riboflavin. The protein is 6,7-dimethyl-8-ribityllumazine synthase of Agathobacter rectalis (strain ATCC 33656 / DSM 3377 / JCM 17463 / KCTC 5835 / VPI 0990) (Eubacterium rectale).